We begin with the raw amino-acid sequence, 1494 residues long: DNA-directed RNA polymerase subunit beta' (1494 aa).

Zn(2+) contacts are provided by cysteine 67, cysteine 69, cysteine 82, and cysteine 85. Mg(2+) contacts are provided by aspartate 499, aspartate 501, and aspartate 503. Zn(2+) contacts are provided by cysteine 868, cysteine 944, cysteine 951, and cysteine 954.

This sequence belongs to the RNA polymerase beta' chain family. In terms of assembly, the RNAP catalytic core consists of 2 alpha, 1 beta, 1 beta' and 1 omega subunit. When a sigma factor is associated with the core the holoenzyme is formed, which can initiate transcription. Requires Mg(2+) as cofactor. Zn(2+) is required as a cofactor.

The catalysed reaction is RNA(n) + a ribonucleoside 5'-triphosphate = RNA(n+1) + diphosphate. In terms of biological role, DNA-dependent RNA polymerase catalyzes the transcription of DNA into RNA using the four ribonucleoside triphosphates as substrates. This chain is DNA-directed RNA polymerase subunit beta', found in Chlorobaculum parvum (strain DSM 263 / NCIMB 8327) (Chlorobium vibrioforme subsp. thiosulfatophilum).